A 566-amino-acid polypeptide reads, in one-letter code: Probable F-box protein At5g39490 (566 aa).

In terms of domain architecture, F-box spans 8 to 54 (ACLLLMLPEDIFVVISRFLSPSDICNLILCGKSLRALVDSEKTWLVQ). The disordered stretch occupies residues 318–338 (LRKSSSSKNTTPSQSEIRHSN). Residues 320–332 (KSSSSKNTTPSQS) show a composition bias toward low complexity.

The chain is Probable F-box protein At5g39490 from Arabidopsis thaliana (Mouse-ear cress).